The sequence spans 134 residues: DNA-directed RNA polymerase subunit omega (134 aa).

Residues 77 to 108 are disordered; the sequence is IDEPEPDPASLLAAGGNASASGDEEEDAPEAV. Low complexity predominate over residues 85–97; the sequence is ASLLAAGGNASAS.

This sequence belongs to the RNA polymerase subunit omega family. As to quaternary structure, the RNAP catalytic core consists of 2 alpha, 1 beta, 1 beta' and 1 omega subunit. When a sigma factor is associated with the core the holoenzyme is formed, which can initiate transcription.

It catalyses the reaction RNA(n) + a ribonucleoside 5'-triphosphate = RNA(n+1) + diphosphate. Its function is as follows. Promotes RNA polymerase assembly. Latches the N- and C-terminal regions of the beta' subunit thereby facilitating its interaction with the beta and alpha subunits. The protein is DNA-directed RNA polymerase subunit omega of Rhizobium rhizogenes (strain K84 / ATCC BAA-868) (Agrobacterium radiobacter).